Reading from the N-terminus, the 274-residue chain is Large ribosomal subunit protein uL2 (274 aa).

The interval 195-274 is disordered; it reads VGNSDHGLER…SKYIIERRKK (80 aa). 2 stretches are compositionally biased toward basic residues: residues 207–220 and 244–264; these read KAGRSRWQGRRPRN and PRSRKGLYAKGLKTRAPKKQS.

It belongs to the universal ribosomal protein uL2 family. Part of the 50S ribosomal subunit. Forms a bridge to the 30S subunit in the 70S ribosome.

In terms of biological role, one of the primary rRNA binding proteins. Required for association of the 30S and 50S subunits to form the 70S ribosome, for tRNA binding and peptide bond formation. It has been suggested to have peptidyltransferase activity; this is somewhat controversial. Makes several contacts with the 16S rRNA in the 70S ribosome. This chain is Large ribosomal subunit protein uL2, found in Bacteroides thetaiotaomicron (strain ATCC 29148 / DSM 2079 / JCM 5827 / CCUG 10774 / NCTC 10582 / VPI-5482 / E50).